The primary structure comprises 279 residues: ATP synthase gamma chain (279 aa).

This sequence belongs to the ATPase gamma chain family. As to quaternary structure, F-type ATPases have 2 components, CF(1) - the catalytic core - and CF(0) - the membrane proton channel. CF(1) has five subunits: alpha(3), beta(3), gamma(1), delta(1), epsilon(1). CF(0) has three main subunits: a, b and c.

Its subcellular location is the cell membrane. In terms of biological role, produces ATP from ADP in the presence of a proton gradient across the membrane. The gamma chain is believed to be important in regulating ATPase activity and the flow of protons through the CF(0) complex. This Mycoplasma genitalium (strain ATCC 33530 / DSM 19775 / NCTC 10195 / G37) (Mycoplasmoides genitalium) protein is ATP synthase gamma chain.